Consider the following 843-residue polypeptide: Protein P (843 aa).

Positions 1–177 are terminal protein domain (TP); it reads MPLSYQHFRK…FCGSPYSWEQ (177 aa). The segment at 178–346 is spacer; that stretch reads DLQHGRLVFQ…YCLSHIVNLI (169 aa). Disordered regions lie at residues 219–249 and 290–316; these read RKSR…RIHP and STSK…RSQS. Over residues 290-299 the composition is skewed to polar residues; it reads STSKGHSSSG. Residues 347 to 690 are polymerase/reverse transcriptase domain (RT); sequence EDWGPCAEHG…YMTLYPVARQ (344 aa). The 244-residue stretch at 357-600 folds into the Reverse transcriptase domain; the sequence is EHRIRTPRTP…YSLNFMGYVI (244 aa). Mg(2+)-binding residues include Asp429, Asp551, and Asp552.

Belongs to the hepadnaviridae P protein family.

The enzyme catalyses DNA(n) + a 2'-deoxyribonucleoside 5'-triphosphate = DNA(n+1) + diphosphate. It catalyses the reaction Endonucleolytic cleavage to 5'-phosphomonoester.. With respect to regulation, activated by host HSP70 and HSP40 in vitro to be able to bind the epsilon loop of the pgRNA. Because deletion of the RNase H region renders the protein partly chaperone-independent, the chaperones may be needed indirectly to relieve occlusion of the RNA-binding site by this domain. Inhibited by several reverse-transcriptase inhibitors: Lamivudine, Adefovir and Entecavir. In terms of biological role, multifunctional enzyme that converts the viral RNA genome into dsDNA in viral cytoplasmic capsids. This enzyme displays a DNA polymerase activity that can copy either DNA or RNA templates, and a ribonuclease H (RNase H) activity that cleaves the RNA strand of RNA-DNA heteroduplexes in a partially processive 3'- to 5'-endonucleasic mode. Neo-synthesized pregenomic RNA (pgRNA) are encapsidated together with the P protein, and reverse-transcribed inside the nucleocapsid. Initiation of reverse-transcription occurs first by binding the epsilon loop on the pgRNA genome, and is initiated by protein priming, thereby the 5'-end of (-)DNA is covalently linked to P protein. Partial (+)DNA is synthesized from the (-)DNA template and generates the relaxed circular DNA (RC-DNA) genome. After budding and infection, the RC-DNA migrates in the nucleus, and is converted into a plasmid-like covalently closed circular DNA (cccDNA). The activity of P protein does not seem to be necessary for cccDNA generation, and is presumably released from (+)DNA by host nuclear DNA repair machinery. In Homo sapiens (Human), this protein is Protein P.